Reading from the N-terminus, the 257-residue chain is Hydroxyacylglutathione hydrolase (257 aa).

Residues His-55, His-57, Asp-59, His-60, His-112, Asp-129, and His-167 each coordinate Zn(2+).

It belongs to the metallo-beta-lactamase superfamily. Glyoxalase II family. As to quaternary structure, monomer. It depends on Zn(2+) as a cofactor.

The catalysed reaction is an S-(2-hydroxyacyl)glutathione + H2O = a 2-hydroxy carboxylate + glutathione + H(+). It participates in secondary metabolite metabolism; methylglyoxal degradation; (R)-lactate from methylglyoxal: step 2/2. In terms of biological role, thiolesterase that catalyzes the hydrolysis of S-D-lactoyl-glutathione to form glutathione and D-lactic acid. The polypeptide is Hydroxyacylglutathione hydrolase (Pseudoalteromonas translucida (strain TAC 125)).